The following is a 426-amino-acid chain: MTQMTDAKSGIITEEMKFVANEEGMDVETLKNLIAKGYVVIPKNVNRNTKPVGIGDNLRTKVNVNLGTSPDFVDIACELKKVEISNKYGADAIMDLSTGGNLPEIRKEIIKNTNLPIGTVPIYEVGVDAKQKYGRVIDMDEDLIFNVIERQAKEGVDFMTLHCGITKQTVNALNNDPRKMGVVSRGGAFLTAYIMYHDRENPLYKEFDYLLELLKEHDVTLSLGDGMRPGCLQDNTDRAQIQELITLGELVDKCREQGVQVMVEGPGHVPYNNIEANMKIQKTVCKNAPFYVLGPIVTDLAPGYDHITAAIGGTLAAVSGANFLCYVTPAEHVRLMKEDDVKEGLIASKIAAQAADVAKGHSIAWKLEKEMADARIKHDWDRQFEIALDSDKPRKMREEIPSKDEKACSVCGDYCALLMVEELGKR.

Substrate-binding positions include Asn65, Met94, Tyr123, His162, 184-186 (SRG), 225-228 (DGMR), and Glu264. His268 is a Zn(2+) binding site. Tyr291 contacts substrate. His332 is a binding site for Zn(2+). Cys408, Cys411, and Cys415 together coordinate [4Fe-4S] cluster.

Belongs to the ThiC family. Requires [4Fe-4S] cluster as cofactor.

The enzyme catalyses 5-amino-1-(5-phospho-beta-D-ribosyl)imidazole + S-adenosyl-L-methionine = 4-amino-2-methyl-5-(phosphooxymethyl)pyrimidine + CO + 5'-deoxyadenosine + formate + L-methionine + 3 H(+). It functions in the pathway cofactor biosynthesis; thiamine diphosphate biosynthesis. In terms of biological role, catalyzes the synthesis of the hydroxymethylpyrimidine phosphate (HMP-P) moiety of thiamine from aminoimidazole ribotide (AIR) in a radical S-adenosyl-L-methionine (SAM)-dependent reaction. The sequence is that of Phosphomethylpyrimidine synthase from Methanococcus maripaludis (strain C7 / ATCC BAA-1331).